We begin with the raw amino-acid sequence, 90 residues long: Small ribosomal subunit protein uS15 (90 aa).

The protein belongs to the universal ribosomal protein uS15 family. In terms of assembly, part of the 30S ribosomal subunit. Forms a bridge to the 50S subunit in the 70S ribosome, contacting the 23S rRNA.

One of the primary rRNA binding proteins, it binds directly to 16S rRNA where it helps nucleate assembly of the platform of the 30S subunit by binding and bridging several RNA helices of the 16S rRNA. Functionally, forms an intersubunit bridge (bridge B4) with the 23S rRNA of the 50S subunit in the ribosome. The polypeptide is Small ribosomal subunit protein uS15 (Mycoplasmoides gallisepticum (strain R(low / passage 15 / clone 2)) (Mycoplasma gallisepticum)).